Here is a 173-residue protein sequence, read N- to C-terminus: Putative pre-16S rRNA nuclease (173 aa).

It belongs to the YqgF nuclease family.

The protein localises to the cytoplasm. Functionally, could be a nuclease involved in processing of the 5'-end of pre-16S rRNA. This chain is Putative pre-16S rRNA nuclease, found in Rhodopirellula baltica (strain DSM 10527 / NCIMB 13988 / SH1).